A 1907-amino-acid polypeptide reads, in one-letter code: Receptor-type tyrosine-protein phosphatase S (1907 aa).

The first 29 residues, 1–29, serve as a signal peptide directing secretion; it reads MAPTWSPSVVSVVGPVGLFLVLLARGCLA. Residues 30-1257 lie on the Extracellular side of the membrane; the sequence is EEPPRFIREP…PQPIVDGEEG (1228 aa). Ig-like C2-type domains follow at residues 33–123, 135–224, and 232–314; these read PRFI…AKLT, PNID…ANLY, and PRFS…AQIT. 2 cysteine pairs are disulfide-bonded: Cys54/Cys107 and Cys156/Cys207. Residues 68–72 are important for binding to glycosaminoglycan chains; sequence KKGKK. Residues Asn250 and Asn295 are each glycosylated (N-linked (GlcNAc...) asparagine). A disulfide bridge connects residues Cys253 and Cys298. Fibronectin type-III domains follow at residues 321-411, 416-510, 514-603, 608-705, 710-809, 810-906, 907-1008, and 1011-1095; these read APGT…TGEQ, APRN…TQQG, QPMN…TLQA, PPQD…TDED, PPRK…TKGA, VLGR…APRG, FPQI…LARD, and SPKN…TAFN. A compositionally biased stretch (low complexity) spans 691–700; the sequence is PGPESSPVVV. The interval 691 to 711 is disordered; the sequence is PGPESSPVVVRTDEDVPSAPP. Residue Asn720 is glycosylated (N-linked (GlcNAc...) asparagine). The N-linked (GlcNAc...) asparagine glycan is linked to Asn916. A helical membrane pass occupies residues 1258–1278; it reads LIWVIGPVLAVVFIICIVIAI. The Cytoplasmic portion of the chain corresponds to 1279–1907; sequence LLYKNKPDSK…YLGSFDHYAT (629 aa). Residues 1286–1296 show a composition bias toward basic and acidic residues; that stretch reads DSKRKDSEPRT. The segment at 1286–1313 is disordered; it reads DSKRKDSEPRTKCLLNNADLAPHHPKDP. Tyrosine-protein phosphatase domains lie at 1352 to 1607 and 1639 to 1898; these read LSQE…LLEA and MELE…ALEY. Substrate is bound by residues Asp1516, 1548–1554, and Gln1592; that span reads CSAGVGR. Catalysis depends on Cys1548, which acts as the Phosphocysteine intermediate. Cys1839 acts as the Phosphocysteine intermediate in catalysis.

It belongs to the protein-tyrosine phosphatase family. Receptor class 2A subfamily. As to quaternary structure, binding to large heparan sulfate proteoglycan structures promotes oligomerization. Binding to chondroitin sulfate proteoglycan does not lead to oligomerization. Interacts (via Ig-like domains) with NTRK3. Interacts (via Ig-like domains) with NTRK1, but does not form detectable complexes with NTRK2. Interacts with PPFIA1, PPFIA2 and PPFIA3. Post-translationally, a cleavage occurs, separating the extracellular domain from the transmembrane segment. This process called 'ectodomain shedding' is thought to be involved in receptor desensitization, signal transduction and/or membrane localization. In terms of tissue distribution, detected in brain cortex, cerebellum and thoracic spinal cord (at protein level). Detected in motor cortex and white matter of the spinal cord, but not in spinal cord gray matter. Isoform 1 and isoform 6 are predominantly expressed in the brain (cerebrum and cerebellum) and to a lesser extent in the heart and skeletal muscle. Also found in neuronal-derived cell lines. Detected in the ganglion cell layer of the retina and in glial cells along the optic nerve. Detected in bone marrow and spleen plasmacytoid dendritic cells.

Its subcellular location is the cell membrane. The protein localises to the cell projection. It localises to the axon. The protein resides in the perikaryon. It is found in the cytoplasmic vesicle. Its subcellular location is the secretory vesicle. The protein localises to the synaptic vesicle membrane. It localises to the synapse. The protein resides in the synaptosome. It is found in the postsynaptic density. Its subcellular location is the neuron projection. The protein localises to the growth cone. It catalyses the reaction O-phospho-L-tyrosyl-[protein] + H2O = L-tyrosyl-[protein] + phosphate. Its function is as follows. Cell surface receptor that binds to glycosaminoglycans, including chondroitin sulfate proteoglycans and heparan sulfate proteoglycans. Binding to chondroitin sulfate and heparan sulfate proteoglycans has opposite effects on PTPRS oligomerization and regulation of neurite outgrowth. Contributes to the inhibition of neurite and axonal outgrowth by chondroitin sulfate proteoglycans, also after nerve transection. Plays a role in stimulating neurite outgrowth in response to the heparan sulfate proteoglycan GPC2. Required for normal brain development, especially for normal development of the pituitary gland and the olfactory bulb. Functions as a tyrosine phosphatase. Mediates dephosphorylation of NTRK1, NTRK2 and NTRK3. Plays a role in down-regulation of signaling cascades that lead to the activation of Akt and MAP kinases. Down-regulates TLR9-mediated activation of NF-kappa-B, as well as production of TNF, interferon alpha and interferon beta. The polypeptide is Receptor-type tyrosine-protein phosphatase S (Ptprs) (Mus musculus (Mouse)).